The chain runs to 385 residues: Tuliposide A-converting enzyme 1, chloroplastic (385 aa).

A chloroplast-targeting transit peptide spans 1–77 (MSVASFFSSL…PSPSLSPTPT (77 aa)). Residue Ser235 is the Acyl-ester intermediate of the active site. Active-site charge relay system residues include Asp327 and His359.

Belongs to the AB hydrolase superfamily. In terms of assembly, homodimer. In terms of tissue distribution, expressed in roots, stems, leaves, petals, stamens and pistils, but not in bulb scales.

The protein resides in the plastid. Its subcellular location is the chloroplast. The enzyme catalyses 6-tuliposide A = tulipalin A + D-glucose. With respect to regulation, inhibited by NaF, AgNO(3), HgCl(2), CuSO(4) and phenylmethylsulfonyl fluoride (PMSF). Lactone-forming carboxylesterases, specifically catalyzing intramolecular transesterification, but not hydrolysis. Involved in the biosynthesis of tulipalins, defensive chemicals that show antimicrobial activities against a broad range of strains of bacteria and fungi. Substrates are 6-tuliposide A &gt; 6-tuliposide B. The protein is Tuliposide A-converting enzyme 1, chloroplastic (TCEA1) of Tulipa gesneriana (Garden tulip).